We begin with the raw amino-acid sequence, 718 residues long: Putative methyltransferase NSUN7 (718 aa).

Residue Cys-439 is the Nucleophile of the active site. 3 disordered regions span residues 536–557, 578–616, and 694–718; these read GKSS…KGAT, ANLS…PAVP, and SLSR…RRWL. Residues 538–549 show a composition bias toward basic residues; it reads SSKREKKKKKSK. Polar residues predominate over residues 591-604; that stretch reads QKNTAQVGASSQTR. The segment covering 696 to 706 has biased composition (basic and acidic residues); sequence SRKEEKPKDDT.

Belongs to the class I-like SAM-binding methyltransferase superfamily. RsmB/NOP family.

May have S-adenosyl-L-methionine-dependent methyl-transferase activity. This is Putative methyltransferase NSUN7 (NSUN7) from Homo sapiens (Human).